An 861-amino-acid polypeptide reads, in one-letter code: Semaphorin-4D (861 aa).

The first 23 residues, 1-23, serve as a signal peptide directing secretion; the sequence is MRMCAPVRGLFLALVVVLRTAVA. The 477-residue stretch at 24-500 folds into the Sema domain; that stretch reads FAPVPRLTWE…SNSGVVQAPL (477 aa). The Extracellular segment spans residues 24–733; the sequence is FAPVPRLTWE…TVYLKSSDNR (710 aa). 2 N-linked (GlcNAc...) asparagine glycosylation sites follow: asparagine 49 and asparagine 77. 2 disulfides stabilise this stretch: cysteine 97/cysteine 108 and cysteine 126/cysteine 135. Asparagine 139 and asparagine 191 each carry an N-linked (GlcNAc...) asparagine glycan. 2 disulfides stabilise this stretch: cysteine 257–cysteine 370 and cysteine 281–cysteine 326. Asparagine 379 and asparagine 419 each carry an N-linked (GlcNAc...) asparagine glycan. Positions 502–551 constitute a PSI domain; the sequence is FCEKHGSCEDCVLARDPYCAWSPAIKACVTLHQEEASSRGWIQDMSGDTS. Disulfide bonds link cysteine 503–cysteine 520, cysteine 509–cysteine 553, cysteine 512–cysteine 529, and cysteine 576–cysteine 624. Residues 555 to 636 form the Ig-like C2-type domain; that stretch reads DKSKESFNQH…EERVRNKTVS (82 aa). N-linked (GlcNAc...) asparagine glycans are attached at residues asparagine 613 and asparagine 632. The tract at residues 649–709 is disordered; sequence VPRTPPSPTS…KSSSGTSCEP (61 aa). Positions 657-681 are enriched in polar residues; it reads TSEDAQTEGSKITSKMPVASTQGSS. Residues 734 to 754 traverse the membrane as a helical segment; sequence LLMSLLLFIFVLFLCLFSYNC. Residues 755 to 861 lie on the Cytoplasmic side of the membrane; the sequence is YKGYLPGQCL…KFADSDADGD (107 aa). Serine 782 and serine 832 each carry phosphoserine. The interval 793 to 839 is disordered; that stretch reads VEPGSFSQQNGDHPKPALDTGYETEQDTITSKVPTDREDSQRIDELS. A compositionally biased stretch (basic and acidic residues) spans 826-839; it reads PTDREDSQRIDELS.

This sequence belongs to the semaphorin family. In terms of assembly, homodimer. Interacts with PLXNB1. Interacts with PLXNB2. Strongly expressed in lymphoid tissues, especially in the thymus, as well as in the nervous tissues. Expressed in neurons and glia in the developing hippocampus.

The protein resides in the cell membrane. In terms of biological role, cell surface receptor for PLXNB1 and PLXNB2 that plays an important role in cell-cell signaling. Regulates GABAergic synapse development. Promotes the development of inhibitory synapses in a PLXNB1-dependent manner. Modulates the complexity and arborization of developing neurites in hippocampal neurons by activating PLXNB1 and interaction with PLXNB1 mediates activation of RHOA. Promotes the migration of cerebellar granule cells. Plays a role in the immune system; induces B-cells to aggregate and improves their viability (in vitro). Induces endothelial cell migration through the activation of PTK2B/PYK2, SRC, and the phosphatidylinositol 3-kinase-AKT pathway. The chain is Semaphorin-4D (Sema4d) from Mus musculus (Mouse).